A 341-amino-acid polypeptide reads, in one-letter code: tRNA N6-adenosine threonylcarbamoyltransferase (341 aa).

The Fe cation site is built by His111 and His115. Residues 134–138, Asp167, Gly180, and Asn276 contribute to the substrate site; that span reads LVSGG. Asp304 lines the Fe cation pocket.

This sequence belongs to the KAE1 / TsaD family. Requires Fe(2+) as cofactor.

It localises to the cytoplasm. The catalysed reaction is L-threonylcarbamoyladenylate + adenosine(37) in tRNA = N(6)-L-threonylcarbamoyladenosine(37) in tRNA + AMP + H(+). In terms of biological role, required for the formation of a threonylcarbamoyl group on adenosine at position 37 (t(6)A37) in tRNAs that read codons beginning with adenine. Is involved in the transfer of the threonylcarbamoyl moiety of threonylcarbamoyl-AMP (TC-AMP) to the N6 group of A37, together with TsaE and TsaB. TsaD likely plays a direct catalytic role in this reaction. The sequence is that of tRNA N6-adenosine threonylcarbamoyltransferase from Stutzerimonas stutzeri (strain A1501) (Pseudomonas stutzeri).